Reading from the N-terminus, the 483-residue chain is Glutamyl-tRNA(Gln) amidotransferase subunit A (483 aa).

Catalysis depends on charge relay system residues Lys-77 and Ser-152. Ser-176 (acyl-ester intermediate) is an active-site residue.

This sequence belongs to the amidase family. GatA subfamily. As to quaternary structure, heterotrimer of A, B and C subunits.

It catalyses the reaction L-glutamyl-tRNA(Gln) + L-glutamine + ATP + H2O = L-glutaminyl-tRNA(Gln) + L-glutamate + ADP + phosphate + H(+). In terms of biological role, allows the formation of correctly charged Gln-tRNA(Gln) through the transamidation of misacylated Glu-tRNA(Gln) in organisms which lack glutaminyl-tRNA synthetase. The reaction takes place in the presence of glutamine and ATP through an activated gamma-phospho-Glu-tRNA(Gln). The protein is Glutamyl-tRNA(Gln) amidotransferase subunit A of Shouchella clausii (strain KSM-K16) (Alkalihalobacillus clausii).